Here is a 1202-residue protein sequence, read N- to C-terminus: Liprin-alpha-1 (1202 aa).

The segment at 1–33 (MMCEVMPTISEAEGPPGGGGGHGSGSPSQPDAD) is disordered. The span at 15–24 (PPGGGGGHGS) shows a compositional bias: gly residues. The stretch at 34-141 (SHFEQLMVSM…VSRHERSLRM (108 aa)) forms a coiled coil. The residue at position 150 (serine 150) is a Phosphoserine. Positions 176–214 (EKVRERLRVALERCSLLEEELGATHKELMILKEQNNQKK) form a coiled coil. 2 disordered regions span residues 224–245 (NHEQ…SLSH) and 426–446 (KNQE…HNKR). Residue threonine 230 is modified to Phosphothreonine. A phosphoserine mark is found at serine 239, serine 242, and serine 244. 2 coiled-coil regions span residues 249 to 521 (LAKV…GASL) and 623 to 669 (ADAH…SGSL). Phosphoserine is present on serine 448. Residues 651 to 662 (ENTEQRAEEIES) show a composition bias toward basic and acidic residues. The disordered stretch occupies residues 651-855 (ENTEQRAEEI…SKLGGQAEKN (205 aa)). Phosphoserine is present on residues serine 666, serine 668, and serine 693. The segment covering 686 to 700 (ASSLASSSPPGSGRS) has biased composition (low complexity). Residues 725–736 (SREEVRDDKTTI) are compositionally biased toward basic and acidic residues. Threonine 761 carries the post-translational modification Phosphothreonine. The segment covering 762 to 771 (VSHEDIRDIR) has biased composition (basic and acidic residues). Serine 763 bears the Phosphoserine mark. Over residues 832–841 (VSETDNSSQD) the composition is skewed to polar residues. Residues 847–871 (KLGGQAEKNRKLQKKHELLEEARRQ) are a coiled coil. 3 consecutive SAM domains span residues 878-944 (WDGP…IMSL), 963-1027 (NHEW…LRRL), and 1051-1120 (WSND…LLVM). A coiled-coil region spans residues 1021–1050 (IMCLRRLNYDRKELERKREESQSEIKDVLV). A Phosphoserine modification is found at serine 1133. Threonine 1159 is subject to Phosphothreonine. Residues 1163–1202 (NFRVTSSMSSPSMQPKKMQMDGNVSGTQRLDSATVRTYSC) are disordered. The span at 1168-1179 (SSMSSPSMQPKK) shows a compositional bias: low complexity. Polar residues predominate over residues 1184 to 1202 (GNVSGTQRLDSATVRTYSC).

This sequence belongs to the liprin family. Liprin-alpha subfamily. Homodimer. Interacts with PTPRF (via D2 domain). Part of a cortical microtubule stabilization complex (CMSC) composed of KANK1, PPFIA1, PPFIBP1, ERC1/ELKS, PHLDB2/LL5beta, CLASPs, KIF21A and possibly additional interactors; within CMSCs KANK1 and PHLDB2/LL5beta seem to be the core components for recruiting microtubule-binding proteins KIF21A and CLASPs, whereas PPFIA1, PPFIBP1 and ERC1/ELKS serve as scaffolds for protein clustering. Ubiquitous.

It is found in the cytoplasm. Its subcellular location is the cell cortex. In terms of biological role, may regulate the disassembly of focal adhesions. May localize receptor-like tyrosine phosphatases type 2A at specific sites on the plasma membrane, possibly regulating their interaction with the extracellular environment and their association with substrates. The polypeptide is Liprin-alpha-1 (PPFIA1) (Homo sapiens (Human)).